The primary structure comprises 252 residues: Carboxymethylenebutenolidase (252 aa).

The segment at 1 to 28 is disordered; that stretch reads MCHNKSSAPPTPAHISIQQNRTPGTDPV. Residues Cys-126, Asp-183, and His-214 contribute to the active site.

The protein belongs to the dienelactone hydrolase family.

The catalysed reaction is 2-(5-oxo-2,5-dihydrofuran-2-ylidene)acetate + H2O = 4-oxohex-2-enedioate + H(+). The protein operates within aromatic compound metabolism; 3-chlorocatechol degradation. In terms of biological role, ring cleavage of cyclic ester dienelactone to produce maleylacetate. The polypeptide is Carboxymethylenebutenolidase (clcD) (Rhodococcus opacus (Nocardia opaca)).